The sequence spans 461 residues: Probable multidrug resistance protein NorM (461 aa).

12 helical membrane passes run 17–37, 51–71, 98–118, 138–158, 165–185, 198–218, 243–263, 275–295, 320–340, 360–380, 398–418, and 424–444; these read FLKLAVPLAGAQMAQAATGFV, AAGGLATMIFMAFMMTGVGLI, LWIVLLLSIPGMLFITHLNGV, VMAWGLFPAIAFATLRGCIIA, IMLIVIAATLFNILGNYGLGF, LAIASISAHWIMFLSLLVYML, LLWVGGPIGIAAVLEYGLYLT, ILAAHQVVSQTVLVLFMVPLA, ALVSIGLAVLFMLTAGIALLA, ALNVGISIMKIAAFGLVLDGL, MVLGTIAYWGIGLTASYLLGF, and GAGVWIGTYIGLAAASIAYLW.

This sequence belongs to the multi antimicrobial extrusion (MATE) (TC 2.A.66.1) family.

The protein resides in the cell inner membrane. In terms of biological role, multidrug efflux pump. This chain is Probable multidrug resistance protein NorM (norM), found in Synechocystis sp. (strain ATCC 27184 / PCC 6803 / Kazusa).